Consider the following 364-residue polypeptide: tRNA N6-adenosine threonylcarbamoyltransferase (364 aa).

Fe cation contacts are provided by His118 and His122. Substrate contacts are provided by residues 140–144, Asp173, Gly186, and Asn288; that span reads LVSGG. Asp316 is a binding site for Fe cation.

This sequence belongs to the KAE1 / TsaD family. It depends on Fe(2+) as a cofactor.

The protein localises to the cytoplasm. It catalyses the reaction L-threonylcarbamoyladenylate + adenosine(37) in tRNA = N(6)-L-threonylcarbamoyladenosine(37) in tRNA + AMP + H(+). In terms of biological role, required for the formation of a threonylcarbamoyl group on adenosine at position 37 (t(6)A37) in tRNAs that read codons beginning with adenine. Is involved in the transfer of the threonylcarbamoyl moiety of threonylcarbamoyl-AMP (TC-AMP) to the N6 group of A37, together with TsaE and TsaB. TsaD likely plays a direct catalytic role in this reaction. The sequence is that of tRNA N6-adenosine threonylcarbamoyltransferase from Cereibacter sphaeroides (strain KD131 / KCTC 12085) (Rhodobacter sphaeroides).